A 146-amino-acid chain; its full sequence is Large ribosomal subunit protein uL15 (146 aa).

Basic and acidic residues predominate over residues 1 to 13 (MKLNELKPNEGSR). A disordered region spans residues 1–54 (MKLNELKPNEGSRRNRKRVGRGTSSGYGKTAGRGQKGQLARTGGKTRLGFEGGQ). The span at 23-35 (TSSGYGKTAGRGQ) shows a compositional bias: gly residues.

Belongs to the universal ribosomal protein uL15 family. As to quaternary structure, part of the 50S ribosomal subunit.

Binds to the 23S rRNA. The polypeptide is Large ribosomal subunit protein uL15 (Lactobacillus johnsonii (strain CNCM I-12250 / La1 / NCC 533)).